Reading from the N-terminus, the 440-residue chain is Thymidine phosphorylase (440 aa).

It belongs to the thymidine/pyrimidine-nucleoside phosphorylase family. As to quaternary structure, homodimer.

It catalyses the reaction thymidine + phosphate = 2-deoxy-alpha-D-ribose 1-phosphate + thymine. Its pathway is pyrimidine metabolism; dTMP biosynthesis via salvage pathway; dTMP from thymine: step 1/2. Its function is as follows. The enzymes which catalyze the reversible phosphorolysis of pyrimidine nucleosides are involved in the degradation of these compounds and in their utilization as carbon and energy sources, or in the rescue of pyrimidine bases for nucleotide synthesis. The protein is Thymidine phosphorylase of Escherichia coli O127:H6 (strain E2348/69 / EPEC).